Here is a 960-residue protein sequence, read N- to C-terminus: UPF0182 protein DSY1630 (960 aa).

The next 7 helical transmembrane spans lie at I7–E27, I50–I70, T105–F125, F169–I189, L212–F232, A256–F276, and L285–L305. Disordered regions lie at residues S866 to T899 and T924 to P960. A compositionally biased stretch (acidic residues) spans E881–E897. The segment covering E931–Q944 has biased composition (basic and acidic residues). A compositionally biased stretch (polar residues) spans S950–P960.

This sequence belongs to the UPF0182 family.

The protein localises to the cell membrane. The polypeptide is UPF0182 protein DSY1630 (Desulfitobacterium hafniense (strain Y51)).